Here is a 161-residue protein sequence, read N- to C-terminus: MKFFAVLALCIVGAIASPLTADEASLVQSSWKAVSHNEVDILAAVFAAYPDIQAKFPQFAGKDLASIKDTGAFATHATRIVSFLSEVIALSGNASNAAAVEGLLNKLGSDHKARGVSAAQFGEFRTALVSYLSNHVSWGDNVAAAWNKALDNTMAVAVAHL.

The signal sequence occupies residues 1–16 (MKFFAVLALCIVGAIA). A Globin domain is found at 18–161 (PLTADEASLV…NTMAVAVAHL (144 aa)). 2 residues coordinate heme b: histidine 76 and histidine 111.

It belongs to the globin family. As to quaternary structure, homodimer.

The chain is Globin CTT-VIIB-4 (CTT-7B4) from Chironomus thummi thummi (Midge).